Here is a 470-residue protein sequence, read N- to C-terminus: Uronate isomerase (470 aa).

Belongs to the metallo-dependent hydrolases superfamily. Uronate isomerase family.

The catalysed reaction is D-glucuronate = D-fructuronate. It catalyses the reaction aldehydo-D-galacturonate = keto-D-tagaturonate. The protein operates within carbohydrate metabolism; pentose and glucuronate interconversion. The polypeptide is Uronate isomerase (Cronobacter sakazakii (strain ATCC BAA-894) (Enterobacter sakazakii)).